The following is a 1004-amino-acid chain: MKNRKIWVMLVGLFTALTNGFMGTTLTFAEENEASQTIEQPSYISDFPNQVGHWQDLVGTAEKKNDSAGLWIANTKQGTNLESVSINLDAREQSSGDLELTFLYEGQSNFGLVFRGDKQKTSQWQSFAYNRDGRWQLGQPGGKWLTNIPGPTLLSGQQYKLLVRYDGKKIQTFLNDQLFYENEEVHYPDGTSINDDWMGAVGIRLFGNLSKLNIISMKSGPVGSIPVIDSSAEYRELKEKWRNQLVSKEYDSTNQALVDYVQKISNEATELDQTMNKEPNRSYLWPLEPGNTPSADLTTQFTKLQKLALAYGTKGSTLYQDDKLAATIIDGLDFMVTQKGYDGKKYHGNWWDWQIGVPQKFLNILMILEDKVSPEKQQIYTNALSSYVPDPFKQLYTKPQGTFVDLAFIPNFVTSGANRTDLALTVLGLGILQKDSGKINQASSSIVDVFKLVTKGDGFYQDGSFIQHNNIPYTGSYGNVLVKGVGQILAITADSSFQMDATLVTEFVENVDRAFLPLIYKGEMLPTVNGRSISRAPAVGKTGYGSTTMYNLLIVAKFAPNNYQKKFQEAVKYWMKENPDYYLTNARDFNDLQMTMQLLTNPEITGGQLPFTGTKLYASMDRFVQRTPSYMFGLGLYSKRTASFEAGNKENKRGWHTGDGMMYVYNDDEVQFNSSYWPTVDPYRLPGTTVDTISLADEVSAFTTITSKEQWVGGVTSDNQAVVGMALNKDGTKNNGKLLPMNLQAKKSWFVLNGQIIALGAGIKGDTEASIETVVDNRLLNDAYQYQVLSNIGEIHEKNETSKKQWLLLKSDHSNANMGYYFPEETTVNVKSETRKGTYKAINEAFPSDKEYVGDYRTFTIQHGQHPTNEHYAYVVLPGIDETDLKTYAAKKTVEVLSNTEEIQAVKQEEEGYLGVNIWSETGGTIAGITSNKAISLMRKTQQHQKTYTFSDPTQTTKTLTLKIPKDYSTVISQSDGITYDDATETFTINFENAAGSSKQIIVE.

Residues 1–29 (MKNRKIWVMLVGLFTALTNGFMGTTLTFA) form the signal peptide. Catalysis depends on residues His-468, Tyr-477, and Arg-531.

This sequence belongs to the polysaccharide lyase 8 family.

Its subcellular location is the secreted. The catalysed reaction is [hyaluronan](n) = n 3-(4-deoxy-beta-D-gluc-4-enuronosyl)-N-acetyl-D-glucosamine + H2O. The enzyme catalyses Eliminative degradation of polysaccharides containing 1,4-beta-D-hexosaminyl and 1,3-beta-D-glucuronosyl linkages to disaccharides containing 4-deoxy-beta-D-gluc-4-enuronosyl groups.. Degrades hyaluronic acid (HA) and chondroitin sulfate (CS) A in vitro. Is not active against heparin sodium salt (HS). Involved in the pathogenesis of vancomycin-resistant E.faecalis infections. Contributes to attenuation of the lipopolysaccharide (LPS)-mediated nuclear factor (NF)-kappa-B activation assayed in the mouse RAW-Blue reporter macrophages. The polypeptide is Hyaluronate lyase HylB (Enterococcus faecalis (strain ATCC 700802 / V583)).